The following is a 258-amino-acid chain: MEPSKMAPLKNAPRDALVMAQILKDMGITDYEPRVINQMLEFAFRYVTTILDDAKIYSSHAKKPTVDADDVRLAIQCRADQSFTSPPPRDFLLDIARQKNQTPLPLIKPYAGPRLPPDRYCLTAPNYRLKSLVKKGPNQGRLVPRLSVGAVSSRPTTPTVAPPQAVSVPNKVATPVSVTSQRFAVQIPTSQSTPAKPAPAATSVQNVLINPSMIGSKNILITTNMVSSQSTATDSNPLKRKHDDDDDDDDDDDDNDTM.

Met-1 is modified (N-acetylmethionine). Ser-147 carries the post-translational modification Phosphoserine. Phosphothreonine occurs at positions 159 and 174. Phosphoserine is present on Ser-177. The segment covering 227–236 has biased composition (polar residues); it reads SSQSTATDSN. Residues 227 to 258 form a disordered region; that stretch reads SSQSTATDSNPLKRKHDDDDDDDDDDDDNDTM. Positions 244–258 are enriched in acidic residues; it reads DDDDDDDDDDDNDTM.

Belongs to the TAF9 family. Binds TAF5 and TAF6. Component of TFIID and the TATA-binding protein-free TAF complex (TFTC). TFIID is composed of TATA binding protein (TBP) and a number of TBP-associated factors (TAFs). Binds N-terminal domain of p53/TP53 which is essential for transcription.

It localises to the nucleus. Essential for cell viability. TAF9 and TAF9L are involved in transcriptional activation as well as repression of distinct but overlapping sets of genes. May have a role in gene regulation associated with apoptosis. TAFs are components of the transcription factor IID (TFIID) complex, the TBP-free TAFII complex (TFTC), the PCAF histone acetylase complex and the STAGA transcription coactivator-HAT complex. TFIID or TFTC are essential for the regulation of RNA polymerase II-mediated transcription. The polypeptide is Transcription initiation factor TFIID subunit 9B (Taf9b) (Rattus norvegicus (Rat)).